The primary structure comprises 386 residues: Prostatic acid phosphatase (386 aa).

Positions 1–32 (MRAAPLLLARAASLSLGFLFLLFFWLDRSVLA) are cleaved as a signal peptide. Arg-43 provides a ligand contact to substrate. His-44 acts as the Nucleophile in catalysis. Arg-47 is a binding site for substrate. An N-linked (GlcNAc...) asparagine glycan is attached at Asn-94. Position 111 (Arg-111) interacts with substrate. Cystine bridges form between Cys-161–Cys-372, Cys-215–Cys-313, and Cys-347–Cys-351. N-linked (GlcNAc...) asparagine glycosylation is present at Asn-220. His-289 lines the substrate pocket. The Proton donor role is filled by Asp-290. An N-linked (GlcNAc...) asparagine glycan is attached at Asn-333.

This sequence belongs to the histidine acid phosphatase family. In terms of assembly, homodimer; dimer formation is required for phosphatase activity. Post-translationally, N-glycosylated. High mannose content, partially sialylated and fucosylated biantennary complex. Also fucosylated with partially sialylated triantennary complex oligosaccharides. Proteolytically cleaved in seminal fluid to produce several peptides. Peptide PAPf39, the most prominent, forms amyloid beta-sheet fibrils, SEVI (semen-derived enhancer of viral infection). In terms of tissue distribution, highly expressed in the prostate, restricted to glandular and ductal epithelial cells. Also expressed in bladder, kidney, pancreas, lung, cervix, testis and ovary. Weak expression in a subset of pancreatic islet cells, squamous epithelia, the pilosebaceous unit, colonic neuroendocrine cells and skin adnexal structures. Low expression in prostate carcinoma cells and tissues. As to expression, widely expressed. Expressed in the sarcolemma of skeletal muscle.

It is found in the secreted. The protein localises to the cell membrane. It localises to the lysosome membrane. Its subcellular location is the nucleus. The protein resides in the cytoplasm. It is found in the cytosol. The enzyme catalyses a phosphate monoester + H2O = an alcohol + phosphate. The catalysed reaction is 1-(9Z-octadecenoyl)-sn-glycero-3-phosphate + H2O = 1-(9Z-octadecenoyl)-sn-glycerol + phosphate. It catalyses the reaction a ribonucleoside 5'-phosphate + H2O = a ribonucleoside + phosphate. It carries out the reaction O-phospho-L-tyrosyl-[protein] + H2O = L-tyrosyl-[protein] + phosphate. With respect to regulation, phosphatase activity inhibited by L(+)-tartrate, and by its derivative, alpha-benzylaminobenzylphosphonic acid. Its function is as follows. A non-specific tyrosine phosphatase that dephosphorylates a diverse number of substrates under acidic conditions (pH 4-6) including alkyl, aryl, and acyl orthophosphate monoesters and phosphorylated proteins. Has lipid phosphatase activity and inactivates lysophosphatidic acid in seminal plasma. Functionally, tyrosine phosphatase that acts as a tumor suppressor of prostate cancer through dephosphorylation of ERBB2 and deactivation of MAPK-mediated signaling. In addition to its tyrosine phosphatase activity has ecto-5'-nucleotidase activity in dorsal root ganglion (DRG) neurons. Generates adenosine from AMP which acts as a pain suppressor. (Microbial infection) Forms amyloid beta-sheet fibrils in semen. These fibrils, termed SEVI (semen-derived enhancer of viral infection) capture HIV virions, attach them to target cells and enhance infection. SEVI amyloid fibrils are degraded by polyphenol epigallocatechin-3-gallate (EGCG), a constituent of green tea. Target cell attachment and enhancement of HIV infection is inhibited by surfen. Also similarly boosts XMRV (xenotropic murine leukemia virus-related virus) infection. This Homo sapiens (Human) protein is Prostatic acid phosphatase.